Reading from the N-terminus, the 474-residue chain is ATP synthase subunit beta 2 (474 aa).

ATP is bound at residue 153 to 160 (GGAGVGKT).

Belongs to the ATPase alpha/beta chains family. As to quaternary structure, F-type ATPases have 2 components, CF(1) - the catalytic core - and CF(0) - the membrane proton channel. CF(1) has five subunits: alpha(3), beta(3), gamma(1), delta(1), epsilon(1). CF(0) has three main subunits: a(1), b(2) and c(9-12). The alpha and beta chains form an alternating ring which encloses part of the gamma chain. CF(1) is attached to CF(0) by a central stalk formed by the gamma and epsilon chains, while a peripheral stalk is formed by the delta and b chains.

The protein localises to the cell inner membrane. The catalysed reaction is ATP + H2O + 4 H(+)(in) = ADP + phosphate + 5 H(+)(out). Produces ATP from ADP in the presence of a proton gradient across the membrane. The catalytic sites are hosted primarily by the beta subunits. This is ATP synthase subunit beta 2 from Syntrophotalea carbinolica (strain DSM 2380 / NBRC 103641 / GraBd1) (Pelobacter carbinolicus).